A 282-amino-acid polypeptide reads, in one-letter code: Fibrinogen-like protein A (282 aa).

The signal sequence occupies residues 1-24 (MFSFIMKAAILLILVGCISFCISS). A Fibrinogen C-terminal domain is found at 61-281 (SHSPEYPRDC…FAEMKLRNRS (221 aa)). 2 disulfides stabilise this stretch: Cys-70/Cys-101 and Cys-224/Cys-240.

The sequence is that of Fibrinogen-like protein A from Apostichopus parvimensis (Warty sea cucumber).